The chain runs to 353 residues: 2,4-diaminopentanoate dehydrogenase (353 aa).

This sequence belongs to the DapB family. In terms of assembly, homodimer.

The catalysed reaction is (2R,4S)-2,4-diaminopentanoate + NAD(+) + H2O = (2R)-2-amino-4-oxopentanoate + NH4(+) + NADH + H(+). It catalyses the reaction (2R,4S)-2,4-diaminopentanoate + NADP(+) + H2O = (2R)-2-amino-4-oxopentanoate + NH4(+) + NADPH + H(+). With respect to regulation, inhibited by p-chloromercuribenzoate, iodoacetate and N-ethylmaleimide. Involved in the ornithine fermentation pathway. Catalyzes the oxidative deamination of (2R,4S)-2,4-diaminopentanoate (DAP) to yield 2-amino-4-ketopentanoate (AKP). The sequence is that of 2,4-diaminopentanoate dehydrogenase from Acetoanaerobium sticklandii (strain ATCC 12662 / DSM 519 / JCM 1433 / CCUG 9281 / NCIMB 10654 / HF) (Clostridium sticklandii).